Here is a 74-residue protein sequence, read N- to C-terminus: uncharacterized protein (74 aa).

This is an uncharacterized protein from Rickettsia conorii (strain ATCC VR-613 / Malish 7).